The chain runs to 1145 residues: Protein sumv-2 (1145 aa).

The span at 1–13 (MKPGRKSLPKKNR) shows a compositional bias: basic residues. Disordered stretches follow at residues 1 to 310 (MKPG…APPA), 429 to 464 (QSRT…QKAR), 999 to 1025 (HSAS…AGSE), 1040 to 1059 (QIAA…PRTE), and 1073 to 1145 (ITTG…ISLI). Polar residues predominate over residues 14–34 (ASNITEKMPTTSTEAQSSSSK). 2 stretches are compositionally biased toward basic and acidic residues: residues 73–104 (KTTE…EPRK) and 216–225 (VPEKKPKIED). A compositionally biased stretch (low complexity) spans 226-248 (APTTSSPKKSTPTSAPPTRASAR). Residues 455 to 464 (GDEKRQQKAR) are compositionally biased toward basic and acidic residues. Residues 999-1013 (HSASSSAAPSPVGAS) are compositionally biased toward low complexity. A compositionally biased stretch (basic and acidic residues) spans 1091 to 1102 (VIERGDFRDHRP). Pro residues predominate over residues 1121–1136 (QQPPLPSPAPPPPRGP).

Functionally, influences the activity of genes involved in vulval development. The chain is Protein sumv-2 from Caenorhabditis elegans.